The sequence spans 224 residues: LexA repressor (224 aa).

A DNA-binding region (H-T-H motif) is located at residues Arg29 to Lys49. Active-site for autocatalytic cleavage activity residues include Ser142 and Lys179.

The protein belongs to the peptidase S24 family. As to quaternary structure, homodimer.

It carries out the reaction Hydrolysis of Ala-|-Gly bond in repressor LexA.. In terms of biological role, represses a number of genes involved in the response to DNA damage (SOS response), including recA and lexA. In the presence of single-stranded DNA, RecA interacts with LexA causing an autocatalytic cleavage which disrupts the DNA-binding part of LexA, leading to derepression of the SOS regulon and eventually DNA repair. The polypeptide is LexA repressor (Bordetella petrii (strain ATCC BAA-461 / DSM 12804 / CCUG 43448)).